Here is a 311-residue protein sequence, read N- to C-terminus: Malate dehydrogenase (311 aa).

NAD(+)-binding positions include 7-13 (GAAGGIG) and Asp-34. The substrate site is built by Arg-81 and Arg-87. NAD(+) contacts are provided by residues Asn-94 and 117–119 (ITN). The substrate site is built by Asn-119 and Arg-153. Residue His-177 is the Proton acceptor of the active site. Met-227 contributes to the NAD(+) binding site.

This sequence belongs to the LDH/MDH superfamily. MDH type 1 family. As to quaternary structure, homodimer.

It carries out the reaction (S)-malate + NAD(+) = oxaloacetate + NADH + H(+). Its function is as follows. Catalyzes the reversible oxidation of malate to oxaloacetate. The polypeptide is Malate dehydrogenase (Vibrio atlanticus (strain LGP32) (Vibrio splendidus (strain Mel32))).